A 439-amino-acid chain; its full sequence is Elongation factor Tu, mitochondrial (439 aa).

The region spanning 51-246 (KPHVNIGTIG…AVDSYITLPE (196 aa)) is the tr-type G domain. The interval 60-67 (GHVDHGKT) is G1. 60–67 (GHVDHGKT) serves as a coordination point for GTP. The segment at 101 to 105 (GITIS) is G2. Positions 122–125 (DCPG) are G3. GTP is bound by residues 122 to 126 (DCPGH) and 177 to 180 (NKVD). The tract at residues 177 to 180 (NKVD) is G4. The tract at residues 214–216 (SAL) is G5.

Belongs to the TRAFAC class translation factor GTPase superfamily. Classic translation factor GTPase family. EF-Tu/EF-1A subfamily.

Its subcellular location is the mitochondrion. This protein promotes the GTP-dependent binding of aminoacyl-tRNA to the A-site of ribosomes during protein biosynthesis. This is Elongation factor Tu, mitochondrial (tuf1) from Schizosaccharomyces pombe (strain 972 / ATCC 24843) (Fission yeast).